The primary structure comprises 496 residues: Glutamate--tRNA ligase (496 aa).

The 'HIGH' region signature appears at 12–22; that stretch reads PSPTGTPHVGL. Residues 256-260 carry the 'KMSKS' region motif; it reads KLSKR. Lys-259 contacts ATP.

This sequence belongs to the class-I aminoacyl-tRNA synthetase family. Glutamate--tRNA ligase type 1 subfamily. Monomer.

The protein resides in the cytoplasm. The catalysed reaction is tRNA(Glu) + L-glutamate + ATP = L-glutamyl-tRNA(Glu) + AMP + diphosphate. Catalyzes the attachment of glutamate to tRNA(Glu) in a two-step reaction: glutamate is first activated by ATP to form Glu-AMP and then transferred to the acceptor end of tRNA(Glu). This is Glutamate--tRNA ligase from Mycobacteroides abscessus (strain ATCC 19977 / DSM 44196 / CCUG 20993 / CIP 104536 / JCM 13569 / NCTC 13031 / TMC 1543 / L948) (Mycobacterium abscessus).